The primary structure comprises 32 residues: Calcitonin (32 aa).

Cysteine 1 and cysteine 7 are oxidised to a cystine. Proline 32 is subject to Proline amide.

Belongs to the calcitonin family.

It is found in the secreted. In terms of biological role, calcitonin is a peptide hormone that causes a rapid but short-lived drop in the level of calcium and phosphate in blood by promoting the incorporation of those ions in the bones. Calcitonin function is mediated by the calcitonin receptor/CALCR and the CALCR-RAMP2 (AMYR2) receptor complex. The sequence is that of Calcitonin (CALCA) from Sus scrofa (Pig).